Reading from the N-terminus, the 125-residue chain is Large ribosomal subunit protein uL24 (125 aa).

Belongs to the universal ribosomal protein uL24 family. As to quaternary structure, part of the 50S ribosomal subunit.

Its function is as follows. One of two assembly initiator proteins, it binds directly to the 5'-end of the 23S rRNA, where it nucleates assembly of the 50S subunit. One of the proteins that surrounds the polypeptide exit tunnel on the outside of the subunit. The protein is Large ribosomal subunit protein uL24 of Mycoplasma mobile (strain ATCC 43663 / 163K / NCTC 11711) (Mesomycoplasma mobile).